The chain runs to 418 residues: Serine hydroxymethyltransferase (418 aa).

Residues leucine 121 and 125–127 contribute to the (6S)-5,6,7,8-tetrahydrofolate site; that span reads GHL. Lysine 230 is subject to N6-(pyridoxal phosphate)lysine. Residues glutamate 246 and 355–357 each bind (6S)-5,6,7,8-tetrahydrofolate; that span reads SPF.

The protein belongs to the SHMT family. In terms of assembly, homodimer. Pyridoxal 5'-phosphate is required as a cofactor.

The protein resides in the cytoplasm. It carries out the reaction (6R)-5,10-methylene-5,6,7,8-tetrahydrofolate + glycine + H2O = (6S)-5,6,7,8-tetrahydrofolate + L-serine. Its pathway is one-carbon metabolism; tetrahydrofolate interconversion. The protein operates within amino-acid biosynthesis; glycine biosynthesis; glycine from L-serine: step 1/1. Functionally, catalyzes the reversible interconversion of serine and glycine with tetrahydrofolate (THF) serving as the one-carbon carrier. This reaction serves as the major source of one-carbon groups required for the biosynthesis of purines, thymidylate, methionine, and other important biomolecules. Also exhibits THF-independent aldolase activity toward beta-hydroxyamino acids, producing glycine and aldehydes, via a retro-aldol mechanism. The protein is Serine hydroxymethyltransferase of Streptococcus pneumoniae (strain Taiwan19F-14).